We begin with the raw amino-acid sequence, 430 residues long: NAD(P)(+) glycohydrolase toxin Tse6 (430 aa).

Transmembrane regions (helical) follow at residues 17–37, 46–66, and 193–213; these read FGVAAMVAGAVAGALIGAAVV, LAAVILAGSIAAGGLSMFQIV, and LLLAAMAGVAALVGVVAIGGL.

As to quaternary structure, interacts with Tsi6, VgrG1a, EagT6 and EF-Tu.

The protein localises to the membrane. The catalysed reaction is NAD(+) + H2O = ADP-D-ribose + nicotinamide + H(+). Functionally, type VI secretion exported toxin that acts as a glycohydrolase on bacterial target cells and degrades the essential dinucleotides NAD(+) and NADP(+), thereby inducing bacteriostasis. The activity resides in the C-terminal region that is initially neutralized by the cognate immunity protein Tsi6. This Pseudomonas aeruginosa (strain ATCC 15692 / DSM 22644 / CIP 104116 / JCM 14847 / LMG 12228 / 1C / PRS 101 / PAO1) protein is NAD(P)(+) glycohydrolase toxin Tse6.